The sequence spans 225 residues: Cytidylate kinase (225 aa).

Residue 12–20 coordinates ATP; the sequence is GPSGAGKGT.

It belongs to the cytidylate kinase family. Type 1 subfamily.

The protein resides in the cytoplasm. It catalyses the reaction CMP + ATP = CDP + ADP. It carries out the reaction dCMP + ATP = dCDP + ADP. The polypeptide is Cytidylate kinase (Vibrio cholerae serotype O1 (strain ATCC 39315 / El Tor Inaba N16961)).